The sequence spans 591 residues: CTP synthase 1-A (591 aa).

A Glutamine amidotransferase type-1 domain is found at S300–Y554. Residues C399, H526, and E528 each act as for GATase activity in the active site.

The protein belongs to the CTP synthase family.

It catalyses the reaction UTP + L-glutamine + ATP + H2O = CTP + L-glutamate + ADP + phosphate + 2 H(+). Its pathway is pyrimidine metabolism; CTP biosynthesis via de novo pathway; CTP from UDP: step 2/2. Its function is as follows. This enzyme is involved in the de novo synthesis of CTP, a precursor of DNA, RNA and phospholipids. Catalyzes the ATP-dependent amination of UTP to CTP with either L-glutamine or ammonia as a source of nitrogen. The protein is CTP synthase 1-A (ctps1-a) of Xenopus laevis (African clawed frog).